Consider the following 110-residue polypeptide: Large ribosomal subunit protein P2C (110 aa).

The interval 83 to 110 (APAAEEAAKEEAKEEEESDEDMGFGLFD) is disordered. The segment covering 95–104 (KEEEESDEDM) has biased composition (acidic residues). Serine 100 is modified (phosphoserine).

This sequence belongs to the eukaryotic ribosomal protein P1/P2 family. In terms of assembly, component of the large ribosomal subunit (LSU). Mature yeast ribosomes consist of a small (40S) and a large (60S) subunit. The 40S small subunit contains 1 molecule of ribosomal RNA (18S rRNA) and at least 33 different proteins. The large 60S subunit contains 3 rRNA molecules (25S, 5.8S and 5S rRNA) and at least 46 different proteins. The acidic ribosomal P-proteins form the stalk structure of the 60S subunit. They are organized as a pentameric complex in which uL10/P0 interacts with 2 heterodimers of P1 and P2 proteins.

The protein resides in the cytoplasm. Component of the ribosome, a large ribonucleoprotein complex responsible for the synthesis of proteins in the cell. The small ribosomal subunit (SSU) binds messenger RNAs (mRNAs) and translates the encoded message by selecting cognate aminoacyl-transfer RNA (tRNA) molecules. The large subunit (LSU) contains the ribosomal catalytic site termed the peptidyl transferase center (PTC), which catalyzes the formation of peptide bonds, thereby polymerizing the amino acids delivered by tRNAs into a polypeptide chain. The nascent polypeptides leave the ribosome through a tunnel in the LSU and interact with protein factors that function in enzymatic processing, targeting, and the membrane insertion of nascent chains at the exit of the ribosomal tunnel. This Schizosaccharomyces pombe (strain 972 / ATCC 24843) (Fission yeast) protein is Large ribosomal subunit protein P2C (rpp203).